The primary structure comprises 585 residues: A-type ATP synthase subunit A (585 aa).

Residue glycine 232–threonine 239 participates in ATP binding.

It belongs to the ATPase alpha/beta chains family. In terms of assembly, has multiple subunits with at least A(3), B(3), C, D, E, F, H, I and proteolipid K(x).

The protein resides in the cell membrane. The enzyme catalyses ATP + H2O + 4 H(+)(in) = ADP + phosphate + 5 H(+)(out). In terms of biological role, component of the A-type ATP synthase that produces ATP from ADP in the presence of a proton gradient across the membrane. The A chain is the catalytic subunit. This chain is A-type ATP synthase subunit A, found in Methanosphaera stadtmanae (strain ATCC 43021 / DSM 3091 / JCM 11832 / MCB-3).